The primary structure comprises 146 residues: Holo-[acyl-carrier-protein] synthase (146 aa).

Mg(2+)-binding residues include D9 and E58.

This sequence belongs to the P-Pant transferase superfamily. AcpS family. Mg(2+) serves as cofactor.

It is found in the cytoplasm. It catalyses the reaction apo-[ACP] + CoA = holo-[ACP] + adenosine 3',5'-bisphosphate + H(+). Its function is as follows. Transfers the 4'-phosphopantetheine moiety from coenzyme A to a Ser of acyl-carrier-protein. The chain is Holo-[acyl-carrier-protein] synthase from Baumannia cicadellinicola subsp. Homalodisca coagulata.